We begin with the raw amino-acid sequence, 735 residues long: 1,4-alpha-glucan branching enzyme GlgB 1 (735 aa).

Asp418 functions as the Nucleophile in the catalytic mechanism. Glu471 serves as the catalytic Proton donor.

The protein belongs to the glycosyl hydrolase 13 family. GlgB subfamily. Monomer.

It catalyses the reaction Transfers a segment of a (1-&gt;4)-alpha-D-glucan chain to a primary hydroxy group in a similar glucan chain.. The protein operates within glycan biosynthesis; glycogen biosynthesis. Catalyzes the formation of the alpha-1,6-glucosidic linkages in glycogen by scission of a 1,4-alpha-linked oligosaccharide from growing alpha-1,4-glucan chains and the subsequent attachment of the oligosaccharide to the alpha-1,6 position. In Rhizobium etli (strain ATCC 51251 / DSM 11541 / JCM 21823 / NBRC 15573 / CFN 42), this protein is 1,4-alpha-glucan branching enzyme GlgB 1.